A 51-amino-acid chain; its full sequence is Lysis protein for colicin A (51 aa).

The signal sequence occupies residues 1 to 18; sequence MKKIIICVILLAIMLLAA. Cys-19 is lipidated: N-palmitoyl cysteine. Cys-19 carries S-diacylglycerol cysteine lipidation. Residues 27 to 51 form a disordered region; the sequence is TGGGSVSPSSIVTGVSMGSDGVGNP.

It localises to the cell outer membrane. In terms of biological role, lysis proteins are required for both colicin release and partial cell lysis. This Citrobacter freundii protein is Lysis protein for colicin A (cal).